The following is a 290-amino-acid chain: ATP synthase gamma chain (290 aa).

This sequence belongs to the ATPase gamma chain family. F-type ATPases have 2 components, CF(1) - the catalytic core - and CF(0) - the membrane proton channel. CF(1) has five subunits: alpha(3), beta(3), gamma(1), delta(1), epsilon(1). CF(0) has three main subunits: a, b and c.

The protein localises to the cell inner membrane. In terms of biological role, produces ATP from ADP in the presence of a proton gradient across the membrane. The gamma chain is believed to be important in regulating ATPase activity and the flow of protons through the CF(0) complex. This chain is ATP synthase gamma chain, found in Buchnera aphidicola subsp. Acyrthosiphon pisum (strain APS) (Acyrthosiphon pisum symbiotic bacterium).